The following is a 393-amino-acid chain: Formate-dependent phosphoribosylglycinamide formyltransferase (393 aa).

N(1)-(5-phospho-beta-D-ribosyl)glycinamide contacts are provided by residues 22–23 and Glu82; that span reads EL. ATP-binding positions include Arg114, Lys155, 160–165, 195–198, and Glu203; these read SSGHGQ and EGFI. In terms of domain architecture, ATP-grasp spans 119–308; that stretch reads RLAAEELGLK…QFALHARAIL (190 aa). Residues Glu267 and Glu279 each coordinate Mg(2+). N(1)-(5-phospho-beta-D-ribosyl)glycinamide contacts are provided by residues Asp286, Lys356, and 363–364; that span reads RR.

The protein belongs to the PurK/PurT family. Homodimer.

The catalysed reaction is N(1)-(5-phospho-beta-D-ribosyl)glycinamide + formate + ATP = N(2)-formyl-N(1)-(5-phospho-beta-D-ribosyl)glycinamide + ADP + phosphate + H(+). It functions in the pathway purine metabolism; IMP biosynthesis via de novo pathway; N(2)-formyl-N(1)-(5-phospho-D-ribosyl)glycinamide from N(1)-(5-phospho-D-ribosyl)glycinamide (formate route): step 1/1. In terms of biological role, involved in the de novo purine biosynthesis. Catalyzes the transfer of formate to 5-phospho-ribosyl-glycinamide (GAR), producing 5-phospho-ribosyl-N-formylglycinamide (FGAR). Formate is provided by PurU via hydrolysis of 10-formyl-tetrahydrofolate. In Actinobacillus pleuropneumoniae serotype 5b (strain L20), this protein is Formate-dependent phosphoribosylglycinamide formyltransferase.